Here is a 103-residue protein sequence, read N- to C-terminus: NADH dehydrogenase [ubiquinone] 1 beta subcomplex subunit 7 (103 aa).

One can recognise a CHCH domain in the interval 27–69 (RDMCAHLLIPLNKCRQAEFYLPWKCEDERHVYEKCEYELVMER). 2 consecutive short sequence motifs (cx9C motif) follow at residues 30–40 (CAHLLIPLNKC) and 51–61 (CEDERHVYEKC). Disulfide bonds link Cys30/Cys61 and Cys40/Cys51.

It belongs to the complex I NDUFB7 subunit family. In terms of assembly, complex I is composed of at least 49 different subunits.

It localises to the mitochondrion. The protein localises to the mitochondrion inner membrane. The protein resides in the mitochondrion intermembrane space. In terms of biological role, accessory subunit of the mitochondrial membrane respiratory chain NADH dehydrogenase (Complex I), that is believed not to be involved in catalysis. Complex I functions in the transfer of electrons from NADH to the respiratory chain. The immediate electron acceptor for the enzyme is believed to be ubiquinone. This Arabidopsis thaliana (Mouse-ear cress) protein is NADH dehydrogenase [ubiquinone] 1 beta subcomplex subunit 7.